Here is a 146-residue protein sequence, read N- to C-terminus: Hemoglobin subunit beta-1 (146 aa).

One can recognise a Globin domain in the interval 2 to 146 (EWTDAEKSTI…VVAAMGSRYF (145 aa)). Heme b is bound by residues His-63 and His-92.

This sequence belongs to the globin family. In terms of assembly, heterotetramer of two alpha chains and two beta chains. As to expression, red blood cells.

In terms of biological role, involved in oxygen transport from gills to the various peripheral tissues. This chain is Hemoglobin subunit beta-1 (hbb1), found in Oncorhynchus mykiss (Rainbow trout).